Reading from the N-terminus, the 361-residue chain is Homeobox protein knotted-1-like 6 (361 aa).

Residues 11 to 48 are disordered; sequence VGASGVHGGHQHQHHHHPWGSSLSAIVAPPPPPQLQQQ. Residues 19–28 show a composition bias toward basic residues; it reads GHQHQHHHHP. The ELK domain maps to 242 to 262; sequence ELKHHLLKKYSGYLSSLKQEL. The homeobox; TALE-type DNA-binding region spans 263–326; the sequence is SKKKKKGKLP…NQRKRHWKPS (64 aa).

Belongs to the TALE/KNOX homeobox family. In terms of assembly, interacts with FTIP7. As to expression, expressed predominantly in shoot apices. Also found to a lesser extent in glumes.

It localises to the nucleus. It is found in the cytoplasm. Its function is as follows. Transcription factor that regulates genes involved in development. May be involved in shoot formation during embryogenesis. Overexpression in transgenic plants causes altered leaf morphology. Regulates anther dehiscence via direct repression of the auxin biosynthetic gene YUCCA4. Binds to the DNA sequence 5'-TGAC-3' in the promoter of the YUCCA4 gene and represses its activity during anther development. Reduction of auxin levels at late stage of anther development, after meiosis of microspore mother cells, is necessary for normal anther dehiscence and seed setting. This Oryza sativa subsp. japonica (Rice) protein is Homeobox protein knotted-1-like 6 (OSH1).